We begin with the raw amino-acid sequence, 55 residues long: PI-stichotoxin-She2b (55 aa).

Positions 3–53 constitute a BPTI/Kunitz inhibitor domain; sequence CLEPKRVGRCKGYFPRFYFDSKTGKCTPFIYGGCGGNGNNFETLHQCRAIC. 3 disulfide bridges follow: Cys3–Cys53, Cys12–Cys36, and Cys28–Cys49.

This sequence belongs to the venom Kunitz-type family. Sea anemone type 2 potassium channel toxin subfamily.

The protein localises to the secreted. Its subcellular location is the nematocyst. Inhibitor of serine, cysteine, and aspartic proteinases. This is PI-stichotoxin-She2b from Stichodactyla helianthus (Sun anemone).